A 513-amino-acid polypeptide reads, in one-letter code: ATP synthase subunit alpha (513 aa).

169–176 (GDRQCGKT) contributes to the ATP binding site.

It belongs to the ATPase alpha/beta chains family. In terms of assembly, F-type ATPases have 2 components, CF(1) - the catalytic core - and CF(0) - the membrane proton channel. CF(1) has five subunits: alpha(3), beta(3), gamma(1), delta(1), epsilon(1). CF(0) has three main subunits: a(1), b(2) and c(9-12). The alpha and beta chains form an alternating ring which encloses part of the gamma chain. CF(1) is attached to CF(0) by a central stalk formed by the gamma and epsilon chains, while a peripheral stalk is formed by the delta and b chains.

The protein localises to the cell inner membrane. It carries out the reaction ATP + H2O + 4 H(+)(in) = ADP + phosphate + 5 H(+)(out). Produces ATP from ADP in the presence of a proton gradient across the membrane. The alpha chain is a regulatory subunit. This Burkholderia cenocepacia (strain ATCC BAA-245 / DSM 16553 / LMG 16656 / NCTC 13227 / J2315 / CF5610) (Burkholderia cepacia (strain J2315)) protein is ATP synthase subunit alpha.